We begin with the raw amino-acid sequence, 468 residues long: Aspartate ammonia-lyase (468 aa).

The L-aspartate site is built by Thr99, Ser138, Thr139, Asn140, and Thr185. The segment at 315–324 (GSSIMPGKVN) is SS loop. Catalysis depends on Ser316, which acts as the Proton acceptor. Positions 317 and 322 each coordinate L-aspartate.

The protein belongs to the class-II fumarase/aspartase family. Aspartase subfamily. As to quaternary structure, homotetramer.

The enzyme catalyses L-aspartate = fumarate + NH4(+). Its function is as follows. Catalyzes the reversible conversion of L-aspartate to fumarate and ammonia. The chain is Aspartate ammonia-lyase (aspA) from Helicobacter pylori (strain ATCC 700392 / 26695) (Campylobacter pylori).